A 175-amino-acid polypeptide reads, in one-letter code: MSDNVSDHKPIVLEHRQVGEAVGDFPPDRRLQLPLTAEERTVLRGRRCSDCGLSLLLQLPREGPLQPGDRLLDRSRSWEVVVIAAPEPLLRVQADSVLELLQAAYHLGNRHVALELHDGELLLLKDSVLEAMLRSRGLRVSACERPFLPEGGAYGGSPSHAHRHSHVHSHSHETP.

Residues 151–175 (GGAYGGSPSHAHRHSHVHSHSHETP) are disordered. The segment covering 160-169 (HAHRHSHVHS) has biased composition (basic residues).

This sequence belongs to the UreE family.

It is found in the cytoplasm. Involved in urease metallocenter assembly. Binds nickel. Probably functions as a nickel donor during metallocenter assembly. In Synechococcus sp. (strain WH7805), this protein is Urease accessory protein UreE.